Here is a 350-residue protein sequence, read N- to C-terminus: Ion-translocating oxidoreductase complex subunit D (350 aa).

A run of 3 helical transmembrane segments spans residues 20–39 (IMMLVTLATVPGIAVQWYFF), 89–109 (IPPLAPWWMVVLGTAFAVIIA), and 123–143 (PAMIGYVVLLISFPVQMTNWL). Thr-187 carries the FMN phosphoryl threonine modification. The next 5 helical transmembrane spans lie at 215-235 (LAGLGWQWVNLAYLAGGLFLL), 244-264 (IPVSFLVTLAVCSTLGWLIAP), 267-287 (FLSPLMHLLSGATMLGAFFIL), 301-321 (LVFGALVGLLVWLIRSFGGYP), and 322-342 (DGVAFAVLLANITVPLIDYYT).

The protein belongs to the NqrB/RnfD family. The complex is composed of six subunits: RnfA, RnfB, RnfC, RnfD, RnfE and RnfG. FMN serves as cofactor.

The protein resides in the cell inner membrane. Its function is as follows. Part of a membrane-bound complex that couples electron transfer with translocation of ions across the membrane. The chain is Ion-translocating oxidoreductase complex subunit D from Cronobacter sakazakii (strain ATCC BAA-894) (Enterobacter sakazakii).